Consider the following 208-residue polypeptide: Vacuolar iron transporter homolog 5 (208 aa).

At 1–41 (MAAMMNNERSSSNKLQVDAENPAAVGDELDLAARANWLRAA) the chain is on the cytoplasmic side. Residues 42–62 (VLGANDGLVSTASLMLGVGAV) traverse the membrane as a helical segment. Topologically, residues 63–69 (KAEARAM) are vacuolar. Residues 70 to 90 (VISGFAGLLAGACSMAIGEFV) form a helical membrane-spanning segment. Topologically, residues 91 to 125 (SVCSQRDVELAQLERDGKRGGEEEKALPSPAQAAA) are cytoplasmic. A helical membrane pass occupies residues 126-146 (ASAMAFSVGAVVPLLAAGFIV). Residues 147–151 (NYRLR) lie on the Vacuolar side of the membrane. The helical transmembrane segment at 152-172 (IAVVVAVASVALAAFGCVGAV) threads the bilayer. Topologically, residues 173–184 (LGRAAVARSSAR) are cytoplasmic. The chain crosses the membrane as a helical span at residues 185–205 (VVLGGWAAMGITFGLMRLFKA). Over 206-208 (SGI) the chain is Vacuolar.

It belongs to the CCC1 family.

The protein resides in the vacuole membrane. The catalysed reaction is Fe(2+)(in) = Fe(2+)(out). In terms of biological role, probable vacuolar iron transporter that may be involved in the regulation of iron distribution throughout the plant. The protein is Vacuolar iron transporter homolog 5 of Oryza sativa subsp. japonica (Rice).